We begin with the raw amino-acid sequence, 138 residues long: Histone H3 (138 aa).

The segment at 1–49 (MARTKQTARKSTGGKAPRKQLATKAARKQAPSQVSGGVKKPHRYRPGTV) is disordered. Residue Lys5 is modified to N6,N6,N6-trimethyllysine; alternate. N6,N6-dimethyllysine; alternate is present on Lys5. An N6-methyllysine; alternate mark is found at Lys5 and Lys10. Lys10 carries the N6-acetyllysine; alternate modification. Ser11 carries the post-translational modification Phosphoserine. Lys15 carries the post-translational modification N6,N6-dimethyllysine; alternate. Residues Lys15, Lys19, Lys24, Lys28, and Lys39 each carry the N6-methyllysine; alternate modification. N6-acetyllysine; alternate is present on residues Lys15, Lys19, Lys24, Lys28, and Lys39. 2 positions are modified to N6,N6,N6-trimethyllysine; alternate: Lys28 and Lys39. N6,N6-dimethyllysine; alternate is present on residues Lys28 and Lys39. 2 positions are modified to N6-acetyllysine: Lys59 and Lys67. Lys82 carries the post-translational modification N6,N6,N6-trimethyllysine; alternate. At Lys82 the chain carries N6,N6-dimethyllysine; alternate. At Lys82 the chain carries N6-methyllysine; alternate.

The protein belongs to the histone H3 family. In terms of assembly, the nucleosome is a histone octamer containing two molecules each of H2A, H2B, H3 and H4 assembled in one H3-H4 heterotetramer and two H2A-H2B heterodimers. The octamer wraps approximately 147 bp of DNA. Phosphorylated to form H3S10ph. H3S10ph promotes subsequent H3K14ac formation and is required for transcriptional activation through TBP recruitment to the promoters. Post-translationally, mono-, di- and trimethylated by the COMPASS complex to form H3K4me1/2/3. H3K4me activates gene expression by regulating transcription elongation and plays a role in telomere length maintenance. H3K4me enrichment correlates with transcription levels, and occurs in a 5' to 3' gradient with H3K4me3 enrichment at the 5'-end of genes, shifting to H3K4me2 and then H3K4me1. Methylated by SET2 to form H3K36me. H3K36me represses gene expression. Methylated by DOT1 to form H3K79me. H3K79me is required for association of SIR proteins with telomeric regions and for telomeric silencing. The COMPASS-mediated formation of H3K4me2/3 and the DOT1-mediated formation of H3K79me require H2BK123ub1. In terms of processing, acetylation of histone H3 leads to transcriptional activation. H3K14ac formation by GCN5 is promoted by H3S10ph. H3K14ac can also be formed by ESA1. H3K56ac formation occurs predominantly in newly synthesized H3 molecules during G1, S and G2/M of the cell cycle and may be involved in DNA repair.

Its subcellular location is the nucleus. The protein resides in the chromosome. In terms of biological role, core component of nucleosome. Nucleosomes wrap and compact DNA into chromatin, limiting DNA accessibility to the cellular machineries which require DNA as a template. Histones thereby play a central role in transcription regulation, DNA repair, DNA replication and chromosomal stability. DNA accessibility is regulated via a complex set of post-translational modifications of histones, also called histone code, and nucleosome remodeling. The chain is Histone H3 (HHT1) from Cryptococcus neoformans var. neoformans serotype D (strain B-3501A) (Filobasidiella neoformans).